The sequence spans 583 residues: Malonate--CoA ligase ACSF3, mitochondrial (583 aa).

The N-terminal 27 residues, 1-27 (MPPHLALPFRRLFWSLASSQLIPRRHR), are a transit peptide targeting the mitochondrion. ATP contacts are provided by residues 202–210 (TSGTTGRPK), aspartate 455, arginine 469, and lysine 561.

It belongs to the ATP-dependent AMP-binding enzyme family.

It localises to the mitochondrion. It carries out the reaction tetracosanoate + ATP + CoA = tetracosanoyl-CoA + AMP + diphosphate. The enzyme catalyses malonate + ATP + CoA = malonyl-CoA + AMP + diphosphate. Functionally, catalyzes the initial reaction in intramitochondrial fatty acid synthesis, by activating malonate and methylmalonate, but not acetate, into their respective CoA thioester. May have some preference toward very-long-chain substrates. The protein is Malonate--CoA ligase ACSF3, mitochondrial of Mus musculus (Mouse).